A 326-amino-acid polypeptide reads, in one-letter code: Peroxidase 43 (326 aa).

A signal peptide spans 1–24 (MVWANAKMRLALSLVTVFFGISLA). 4 disulfide bridges follow: Cys35–Cys112, Cys68–Cys73, Cys118–Cys322, and Cys196–Cys228. His66 (proton acceptor) is an active-site residue. 5 residues coordinate Ca(2+): Asp67, Val70, Gly72, Asp74, and Ser76. Asn151 carries N-linked (GlcNAc...) asparagine glycosylation. Pro159 lines the substrate pocket. His189 lines the heme b pocket. Thr190 serves as a coordination point for Ca(2+). Residues Asp241, Ser244, and Asp249 each contribute to the Ca(2+) site.

This sequence belongs to the peroxidase family. Classical plant (class III) peroxidase subfamily. Heme b serves as cofactor. The cofactor is Ca(2+).

Its subcellular location is the secreted. The catalysed reaction is 2 a phenolic donor + H2O2 = 2 a phenolic radical donor + 2 H2O. Its function is as follows. Removal of H(2)O(2), oxidation of toxic reductants, biosynthesis and degradation of lignin, suberization, auxin catabolism, response to environmental stresses such as wounding, pathogen attack and oxidative stress. These functions might be dependent on each isozyme/isoform in each plant tissue. This chain is Peroxidase 43 (PER43), found in Arabidopsis thaliana (Mouse-ear cress).